The chain runs to 299 residues: Phosphatidylserine decarboxylase proenzyme (299 aa).

Catalysis depends on charge relay system; for autoendoproteolytic cleavage activity residues aspartate 90, histidine 147, and serine 254. Serine 254 serves as the catalytic Schiff-base intermediate with substrate; via pyruvic acid; for decarboxylase activity. The residue at position 254 (serine 254) is a Pyruvic acid (Ser); by autocatalysis.

This sequence belongs to the phosphatidylserine decarboxylase family. PSD-B subfamily. Prokaryotic type I sub-subfamily. In terms of assembly, heterodimer of a large membrane-associated beta subunit and a small pyruvoyl-containing alpha subunit. It depends on pyruvate as a cofactor. Is synthesized initially as an inactive proenzyme. Formation of the active enzyme involves a self-maturation process in which the active site pyruvoyl group is generated from an internal serine residue via an autocatalytic post-translational modification. Two non-identical subunits are generated from the proenzyme in this reaction, and the pyruvate is formed at the N-terminus of the alpha chain, which is derived from the carboxyl end of the proenzyme. The autoendoproteolytic cleavage occurs by a canonical serine protease mechanism, in which the side chain hydroxyl group of the serine supplies its oxygen atom to form the C-terminus of the beta chain, while the remainder of the serine residue undergoes an oxidative deamination to produce ammonia and the pyruvoyl prosthetic group on the alpha chain. During this reaction, the Ser that is part of the protease active site of the proenzyme becomes the pyruvoyl prosthetic group, which constitutes an essential element of the active site of the mature decarboxylase.

The protein localises to the cell membrane. The enzyme catalyses a 1,2-diacyl-sn-glycero-3-phospho-L-serine + H(+) = a 1,2-diacyl-sn-glycero-3-phosphoethanolamine + CO2. The protein operates within phospholipid metabolism; phosphatidylethanolamine biosynthesis; phosphatidylethanolamine from CDP-diacylglycerol: step 2/2. Its function is as follows. Catalyzes the formation of phosphatidylethanolamine (PtdEtn) from phosphatidylserine (PtdSer). The protein is Phosphatidylserine decarboxylase proenzyme of Erwinia tasmaniensis (strain DSM 17950 / CFBP 7177 / CIP 109463 / NCPPB 4357 / Et1/99).